The sequence spans 345 residues: Heat-inducible transcription repressor HrcA (345 aa).

The protein belongs to the HrcA family.

In terms of biological role, negative regulator of class I heat shock genes (grpE-dnaK-dnaJ and groELS operons). Prevents heat-shock induction of these operons. The chain is Heat-inducible transcription repressor HrcA from Zymomonas mobilis subsp. mobilis (strain ATCC 31821 / ZM4 / CP4).